The primary structure comprises 175 residues: NADH-ubiquinone oxidoreductase chain 6 (175 aa).

5 helical membrane-spanning segments follow: residues 1–21 (MMYMVFLLSVAFVISFIGFSS), 26–46 (IYGGLGLIVGGGVGCGIVMGL), 47–67 (GGSFLGLMVFLVYLGGMLVVF), 87–107 (VILSALFVGLLVEVAMIVWMI), and 152–172 (WLVILAGWSLFVSIFIVIEIT).

Belongs to the complex I subunit 6 family.

The protein localises to the mitochondrion membrane. The catalysed reaction is a ubiquinone + NADH + 5 H(+)(in) = a ubiquinol + NAD(+) + 4 H(+)(out). Functionally, core subunit of the mitochondrial membrane respiratory chain NADH dehydrogenase (Complex I) that is believed to belong to the minimal assembly required for catalysis. Complex I functions in the transfer of electrons from NADH to the respiratory chain. The immediate electron acceptor for the enzyme is believed to be ubiquinone. This is NADH-ubiquinone oxidoreductase chain 6 (MT-ND6) from Dasypus novemcinctus (Nine-banded armadillo).